The sequence spans 211 residues: Large ribosomal subunit protein uL4 (211 aa).

The tract at residues 42–73 (NNRQGTHSTKDRSEVRGGGIKPWAQKGTGRAR) is disordered.

The protein belongs to the universal ribosomal protein uL4 family. In terms of assembly, part of the 50S ribosomal subunit.

Its function is as follows. One of the primary rRNA binding proteins, this protein initially binds near the 5'-end of the 23S rRNA. It is important during the early stages of 50S assembly. It makes multiple contacts with different domains of the 23S rRNA in the assembled 50S subunit and ribosome. Functionally, forms part of the polypeptide exit tunnel. The sequence is that of Large ribosomal subunit protein uL4 from Leptospira biflexa serovar Patoc (strain Patoc 1 / Ames).